The following is a 153-amino-acid chain: Natriuretic peptides A (153 aa).

An N-terminal signal peptide occupies residues 1–25 (MGPFSTITVSFLFCLAFWHPDQIGA). Propeptides lie at residues 26 to 123 (NPVY…TAPR) and 93 to 103 (DGEALGRSTWE). Residues 54-101 (EDEAVPPQALSEQSDEAGAALSPLPEVPPWTGEVSPAQRDGEALGRST) form a disordered region. Phosphoserine is present on serine 129. Cysteine 130 and cysteine 146 are disulfide-bonded. Residues 147 to 151 (NSFRY) form an important for degradation of atrial natriuretic peptide by IDE region.

Belongs to the natriuretic peptide family. In terms of assembly, homodimer; disulfide-linked antiparallel dimer. In terms of processing, the precursor molecule is proteolytically cleaved by CORIN at Arg-123 to produce the atrial natriuretic peptide. Undergoes further proteolytic cleavage by unknown proteases to give rise to long-acting natriuretic peptide, vessel dilator and kaliuretic peptide. Additional processing gives rise to the auriculin and atriopeptin peptides. In the kidneys, alternative processing by an unknown protease results in the peptide urodilatin. Cleavage by MME initiates degradation of the factor and thereby regulates its activity. Degradation by IDE results in reduced activation of NPR1 (in vitro). During IDE degradation, the resulting products can temporarily stimulate NPR2 to produce cGMP, before the fragments are completely degraded and inactivated by IDE (in vitro). Post-translationally, degraded by IDE. In terms of processing, phosphorylation on Ser-129 decreases vasorelaxant activity.

Its subcellular location is the secreted. It is found in the perikaryon. The protein resides in the cell projection. Its function is as follows. Hormone that plays a key role in mediating cardio-renal homeostasis, and is involved in vascular remodeling and regulating energy metabolism. Acts by specifically binding and stimulating NPR1 to produce cGMP, which in turn activates effector proteins, such as PRKG1, that drive various biological responses. Regulates vasodilation, natriuresis, diuresis and aldosterone synthesis and is therefore essential for regulating blood pressure, controlling the extracellular fluid volume and maintaining the fluid-electrolyte balance. Also involved in inhibiting cardiac remodeling and cardiac hypertrophy by inducing cardiomyocyte apoptosis and attenuating the growth of cardiomyocytes and fibroblasts. Plays a role in female pregnancy by promoting trophoblast invasion and spiral artery remodeling in uterus, and thus prevents pregnancy-induced hypertension. In adipose tissue, acts in various cGMP- and PKG-dependent pathways to regulate lipid metabolism and energy homeostasis. This includes up-regulating lipid metabolism and mitochondrial oxygen utilization by activating the AMP-activated protein kinase (AMPK), and increasing energy expenditure by acting via MAPK11 to promote the UCP1-dependent thermogenesis of brown adipose tissue. Binds the clearance receptor NPR3 which removes the hormone from circulation. Functionally, may have a role in cardio-renal homeostasis through regulation of natriuresis, diuresis, vasodilation, and inhibiting aldosterone synthesis. In vitro, promotes the production of cGMP and induces vasodilation. May promote natriuresis, at least in part, by enhancing prostaglandin E2 synthesis resulting in the inhibition of renal Na+-K+-ATPase. However reports on the involvement of this peptide in mammal blood volume and blood pressure homeostasis are conflicting; according to a report, in vivo it is not sufficient to activate cGMP and does not inhibit collecting duct transport nor effect diuresis and natriuresis. Appears to bind to specific receptors that are distinct from the receptors bound by atrial natriuretic peptide and vessel dilator. Possibly enhances protein excretion in urine by decreasing proximal tubular protein reabsorption. May have a role in cardio-renal homeostasis through regulation of natriuresis, diuresis, and vasodilation. In vitro, promotes the production of cGMP and induces vasodilation. May promote natriuresis, at least in part, by enhancing prostaglandin E2 synthesis resulting in the inhibition of renal Na+-K+-ATPase. However reports on the involvement of this peptide in mammal blood volume and blood pressure homeostasis are conflicting; according to a report it is not sufficient to activate cGMP and does not inhibit collecting duct transport nor effect diuresis and natriuresis. Appears to bind to specific receptors that are distinct from the receptors bound by the atrial natriuretic and long-acting natriuretic peptides. Possibly functions in protein excretion in urine by maintaining the integrity of the proximal tubules and enhancing protein excretion by decreasing proximal tubular protein reabsorption. In terms of biological role, may have a role in cardio-renal homeostasis through regulation of diuresis and inhibiting aldosterone synthesis. In vitro, promotes the production of cGMP and induces vasodilation. May promote natriuresis, at least in part, by enhancing prostaglandin E2 synthesis resulting in the inhibition of renal Na+-K+-ATPase. May have a role in potassium excretion but not sodium excretion (natriuresis). Possibly enhances protein excretion in urine by decreasing proximal tubular protein reabsorption. Its function is as follows. Hormone produced in the kidneys that appears to be important for maintaining cardio-renal homeostasis. Mediates vasodilation, natriuresis and diuresis primarily in the renal system, in order to maintain the extracellular fluid volume and control the fluid-electrolyte balance. Specifically binds and stimulates cGMP production by renal transmembrane receptors, likely NPR1. Urodilatin not ANP, may be the natriuretic peptide responsible for the regulation of sodium and water homeostasis in the kidney. Functionally, may have a role in cardio-renal homeostasis through regulation of natriuresis and vasodilation. In vivo promotes natriuresis and in vitro, vasodilates renal artery strips. May have a role in cardio-renal homeostasis through regulation of regulation of natriuresis and vasodilation. In vivo promotes natriuresis. In vitro, vasodilates intestinal smooth muscle but not smooth muscle strips. In terms of biological role, may have a role in cardio-renal homeostasis through regulation of natriuresis and vasodilation. In vivo promotes natriuresis. In vitro, selectively vasodilates intestinal and vascular smooth muscle strips. Its function is as follows. May have a role in cardio-renal homeostasis through regulation of natriuresis and vasodilation. In vivo promotes natriuresis. In vitro, selectively vasodilates intestinal smooth muscle but not vascular smooth muscle strips. This is Natriuretic peptides A (NPPA) from Oryctolagus cuniculus (Rabbit).